The primary structure comprises 1274 residues: Virulence protein SSD1 (1274 aa).

Residues 1–13 (MSSSQDYNNNSNN) show a composition bias toward low complexity. Disordered stretches follow at residues 1–38 (MSSSQDYNNNSNNTPARVSSRKGKNLHVAHRRSPSELT), 61–124 (LEEK…GHSR), 138–337 (ANQK…TLFA), and 413–488 (KEKE…DDVE). Positions 19–32 (SSRKGKNLHVAHRR) are enriched in basic residues. Over residues 72–81 (FTYPSAQGSS) the composition is skewed to polar residues. Over residues 95-106 (NRSSHSRSSSIN) the composition is skewed to low complexity. Residues 139 to 152 (NQKQSNRNSLSPTI) show a composition bias toward polar residues. A compositionally biased stretch (low complexity) spans 177–187 (GDTSGQSSSSH). Residues 248 to 263 (SGSNTNTDGINSNWRA) are compositionally biased toward polar residues. Low complexity predominate over residues 264-282 (QQQSPQQQQRQGGLLEPPQ). Positions 320–330 (QQGGHQGGGNN) are enriched in gly residues. The span at 413–437 (KEKEEKKRRKDNTLHSRPLTDDIHN) shows a compositional bias: basic and acidic residues. Residues 438–453 (DATSAPNTAEGSVTGT) show a composition bias toward polar residues. Residues 562–637 (VWFKPTDKKV…EIDSILRDNN (76 aa)) enclose the CSD2 domain. The 314-residue stretch at 688 to 1001 (FVDHALHVKR…VHRQLKAVLN (314 aa)) folds into the RNB domain. Positions 1050-1136 (GQLLCMGTVV…KNKYRTSALQ (87 aa)) constitute a DIS3L2 C-terminal domain. Positions 1174–1217 (SLKSNELHEVEKDETKSMPSSPTQSEIPKNVRTNSSSRISSSGN) are disordered. Residues 1178-1189 (NELHEVEKDETK) are compositionally biased toward basic and acidic residues. Polar residues predominate over residues 1190-1207 (SMPSSPTQSEIPKNVRTN).

This sequence belongs to the RNR ribonuclease family.

Functionally, plays a role in resistance to host antimicrobial peptides such as protamine, RP-1, or human beta-defensin-2; allowing colonization of human tissues. Required for resistance to membrane permeabilization and maintenance of mitochondrial membrane potential upon exposure to RP-1. In Candida albicans (strain SC5314 / ATCC MYA-2876) (Yeast), this protein is Virulence protein SSD1 (SSD1).